A 514-amino-acid polypeptide reads, in one-letter code: Histidine ammonia-lyase (514 aa).

Positions 146-148 (ASG) form a cross-link, 5-imidazolinone (Ala-Gly). At serine 147 the chain carries 2,3-didehydroalanine (Ser).

This sequence belongs to the PAL/histidase family. Contains an active site 4-methylidene-imidazol-5-one (MIO), which is formed autocatalytically by cyclization and dehydration of residues Ala-Ser-Gly.

Its subcellular location is the cytoplasm. It carries out the reaction L-histidine = trans-urocanate + NH4(+). Its pathway is amino-acid degradation; L-histidine degradation into L-glutamate; N-formimidoyl-L-glutamate from L-histidine: step 1/3. This is Histidine ammonia-lyase from Clostridium tetani (strain Massachusetts / E88).